The primary structure comprises 652 residues: DNA ligase (652 aa).

Residues 29–33, 78–79, and E107 each bind NAD(+); these read DSEYD and SL. K109 functions as the N6-AMP-lysine intermediate in the catalytic mechanism. R130, E164, K278, and K302 together coordinate NAD(+). Zn(2+) contacts are provided by C395, C398, C413, and C418. The BRCT domain maps to 577–652; sequence VADAALSGLT…VRDEAWLESL (76 aa).

It belongs to the NAD-dependent DNA ligase family. LigA subfamily. Mg(2+) serves as cofactor. Mn(2+) is required as a cofactor.

It carries out the reaction NAD(+) + (deoxyribonucleotide)n-3'-hydroxyl + 5'-phospho-(deoxyribonucleotide)m = (deoxyribonucleotide)n+m + AMP + beta-nicotinamide D-nucleotide.. In terms of biological role, DNA ligase that catalyzes the formation of phosphodiester linkages between 5'-phosphoryl and 3'-hydroxyl groups in double-stranded DNA using NAD as a coenzyme and as the energy source for the reaction. It is essential for DNA replication and repair of damaged DNA. This is DNA ligase from Streptococcus pneumoniae (strain 70585).